The chain runs to 249 residues: Triosephosphate isomerase (249 aa).

Residue 8-10 (NWK) participates in substrate binding. Histidine 95 serves as the catalytic Electrophile. Glutamate 163 (proton acceptor) is an active-site residue. Substrate-binding residues include glycine 169 and serine 209.

The protein belongs to the triosephosphate isomerase family. In terms of assembly, homodimer.

Its subcellular location is the cytoplasm. It carries out the reaction D-glyceraldehyde 3-phosphate = dihydroxyacetone phosphate. It participates in carbohydrate biosynthesis; gluconeogenesis. The protein operates within carbohydrate degradation; glycolysis; D-glyceraldehyde 3-phosphate from glycerone phosphate: step 1/1. In terms of biological role, involved in the gluconeogenesis. Catalyzes stereospecifically the conversion of dihydroxyacetone phosphate (DHAP) to D-glyceraldehyde-3-phosphate (G3P). The sequence is that of Triosephosphate isomerase from Orientia tsutsugamushi (strain Boryong) (Rickettsia tsutsugamushi).